A 270-amino-acid polypeptide reads, in one-letter code: High choriolytic enzyme 1 (270 aa).

A signal peptide spans 1 to 20; the sequence is MNLAPSTCLLLLFLLDIAQA. A propeptide spans 21 to 70 (activation peptide); that stretch reads LPVWDEEGHEEGHEEGDGDDFVDITTRILTSNNNTDQLLLEGDLVAPTNR. Residue asparagine 53 is glycosylated (N-linked (GlcNAc...) asparagine). The 200-residue stretch at 71 to 270 folds into the Peptidase M12A domain; that stretch reads NAMKCWSSSC…TRINVLYNCR (200 aa). 3 cysteine pairs are disulfide-bonded: cysteine 75-cysteine 80, cysteine 120-cysteine 269, and cysteine 141-cysteine 161. Histidine 169 contributes to the Zn(2+) binding site. Glutamate 170 is an active-site residue. Histidine 173 and histidine 179 together coordinate Zn(2+).

Zn(2+) serves as cofactor.

The protein localises to the zymogen granule. It carries out the reaction Hydrolysis of the inner layer of fish egg envelope. Also hydrolysis of casein and small molecule substrates such as succinyl-Leu-Leu-Val-Tyr-|-7-(4-methyl)coumarylamide.. Its function is as follows. Participates in the breakdown of the egg envelope, which is derived from the egg extracellular matrix, at the time of hatching. Thus allowing the newly hatched fish to swim free. HCE binds tightly to the egg envelope while it exerts the choriolytic swelling action. The protein is High choriolytic enzyme 1 (hcea) of Oryzias latipes (Japanese rice fish).